The following is a 412-amino-acid chain: Argininosuccinate synthase (412 aa).

ATP is bound by residues 24–32 (AFSGGLDTS) and Ala-50. Residues Tyr-103 and Ser-108 each coordinate L-citrulline. Residue Gly-132 participates in ATP binding. L-aspartate contacts are provided by Thr-134, Asn-138, and Asp-139. An L-citrulline-binding site is contributed by Asn-138. Arg-142 lines the L-citrulline pocket.

Belongs to the argininosuccinate synthase family. Type 1 subfamily. Homotetramer.

The protein localises to the cytoplasm. The enzyme catalyses L-citrulline + L-aspartate + ATP = 2-(N(omega)-L-arginino)succinate + AMP + diphosphate + H(+). The protein operates within amino-acid biosynthesis; L-arginine biosynthesis; L-arginine from L-ornithine and carbamoyl phosphate: step 2/3. The sequence is that of Argininosuccinate synthase from Xanthomonas axonopodis pv. citri (strain 306).